A 192-amino-acid chain; its full sequence is Anthrone oxygenase (192 aa).

The next 3 helical transmembrane spans lie at 12–32, 54–74, and 86–106; these read IVTG…TVPV, GHIS…YIAA, and AALV…VMSS. Residues N130, N138, and N147 are each glycosylated (N-linked (GlcNAc...) asparagine). The chain crosses the membrane as a helical span at residues 172–192; sequence MHLVRSLFPLMAAVLGVGICV.

The protein belongs to the anthrone oxygenase family.

The protein localises to the membrane. The enzyme catalyses emodin anthrone + O2 = emodin + H2O + H(+). It functions in the pathway secondary metabolite biosynthesis. Its function is as follows. Anthrone oxygenase; part of the gene cluster that mediates the biosynthesis of monodictyphenone, a prenyl xanthone derivative. The pathway begins with the synthesis of atrochrysone thioester by the polyketide synthase (PKS) mdpG. The atrochrysone carboxyl ACP thioesterase mdpF then breaks the thioester bond and releases the atrochrysone carboxylic acid from mdpG. The atrochrysone carboxylic acid is then converted to atrochrysone which is further transformed into emodin anthrone by mdpH-1 and mdpH-2. Emodin is further modified to yield monodictyphenone via several steps involving mdpB, mdpC mdpJ, mdpK and mdpL. These enzymes with xptA, xptB and xptC are also proposed to be involved in the synthesis of shamixanthone from emodin. Especially, direct reduction of emodin by the short chain dehydrogenase mdpC followed by dehydration catalyzed by the scytalone dehydratase-like protein mdpB gives loss of oxygen and formation of chrysophanol intermediate in two simple steps. In Emericella nidulans (strain FGSC A4 / ATCC 38163 / CBS 112.46 / NRRL 194 / M139) (Aspergillus nidulans), this protein is Anthrone oxygenase.